The chain runs to 278 residues: Putative protein-disulfide oxidoreductase RF_0032 (278 aa).

Residues 1–18 form the signal peptide; the sequence is MRSIFIVPIFLLFLSSCS. The disordered stretch occupies residues 62 to 84; it reads VPANDNNQTDEVSTPPSQEQKNP. Over residues 65 to 81 the composition is skewed to polar residues; sequence NDNNQTDEVSTPPSQEQ. In terms of domain architecture, Thioredoxin spans 77 to 266; the sequence is PSQEQKNPEI…ISTAVDKALE (190 aa). An intrachain disulfide couples cysteine 119 to cysteine 122.

The protein belongs to the thioredoxin family. DsbA subfamily.

The protein localises to the periplasm. May be required for disulfide bond formation in some proteins. This is Putative protein-disulfide oxidoreductase RF_0032 from Rickettsia felis (strain ATCC VR-1525 / URRWXCal2) (Rickettsia azadi).